We begin with the raw amino-acid sequence, 434 residues long: MYKRYKDVSLILKIVIGIIVGAVLGVMVPSWSFIDVLGKLFVGALKAIAPLLVFLLIMSAISKYRSGAKNHFGTVIVLYLSATLFSSIAAVAVSYLFPIKLVLPGAMKIAESAPKDLGTVVTSLLTNAVANPISALVEGNYLAILFWSLLIGSGLRLTSAVTKKVVTELADTVSAVAQNVIQFAPFGIVGLLHESLSKTGVKGVMAYGQLLMLLVATMVFVYLVVYPFMVWLMTRKNPYPLTFWTLKVSGIPAFFTRSGAVNIPINLKASKDLGLNEESYAISIPLGGSANSGGAAITVSIMTLATANTMGVHVSIFLALLLCFLSAISATGVSGIAGGSLLLIPMAASLFGISNDIAMQVVGIGFIIGVVQDSVETAVNSASDLLFTATAEYADDRREGHPVDIRAKVKAAGKGTAEVVTPEKTNEAEESEQV.

9 helical membrane-spanning segments follow: residues 14–34 (IVIGIIVGAVLGVMVPSWSFI), 41–61 (FVGALKAIAPLLVFLLIMSAI), 72–92 (FGTVIVLYLSATLFSSIAAVA), 135–155 (ALVEGNYLAILFWSLLIGSGL), 172–192 (TVSAVAQNVIQFAPFGIVGLL), 210–230 (LLMLLVATMVFVYLVVYPFMV), 282–302 (ISIPLGGSANSGGAAITVSIM), 316–336 (IFLALLLCFLSAISATGVSGI), and 351–371 (FGISNDIAMQVVGIGFIIGVV). Positions 413-434 (GKGTAEVVTPEKTNEAEESEQV) are disordered.

The protein belongs to the dicarboxylate/amino acid:cation symporter (DAACS) (TC 2.A.23) family.

The protein resides in the cell membrane. The enzyme catalyses L-serine(in) + Na(+)(in) = L-serine(out) + Na(+)(out). It catalyses the reaction L-threonine(in) + Na(+)(in) = L-threonine(out) + Na(+)(out). Its function is as follows. Involved in the import of serine and threonine into the cell, with the concomitant import of sodium (symport system). The polypeptide is Serine/threonine transporter SstT (Lacticaseibacillus casei (strain BL23) (Lactobacillus casei)).